The following is a 632-amino-acid chain: MASSPLLATSLPQNQLSTTATARFRLPPPEKLAVLIDKSQSVDEVLQIHAAILRHNLLLHPRYPVLNLKLHRAYASHGKIRHSLALFHQTIDPDLFLFTAAINTASINGLKDQAFLLYVQLLSSEINPNEFTFSSLLKSCSTKSGKLIHTHVLKFGLGIDPYVATGLVDVYAKGGDVVSAQKVFDRMPERSLVSSTAMITCYAKQGNVEAARALFDSMCERDIVSWNVMIDGYAQHGFPNDALMLFQKLLAEGKPKPDEITVVAALSACSQIGALETGRWIHVFVKSSRIRLNVKVCTGLIDMYSKCGSLEEAVLVFNDTPRKDIVAWNAMIAGYAMHGYSQDALRLFNEMQGITGLQPTDITFIGTLQACAHAGLVNEGIRIFESMGQEYGIKPKIEHYGCLVSLLGRAGQLKRAYETIKNMNMDADSVLWSSVLGSCKLHGDFVLGKEIAEYLIGLNIKNSGIYVLLSNIYASVGDYEGVAKVRNLMKEKGIVKEPGISTIEIENKVHEFRAGDREHSKSKEIYTMLRKISERIKSHGYVPNTNTVLQDLEETEKEQSLQVHSERLAIAYGLISTKPGSPLKIFKNLRVCSDCHTVTKLISKITGRKIVMRDRNRFHHFTDGSCSCGDFW.

A chloroplast-targeting transit peptide spans Met1–Thr19. PPR repeat units follow at residues Asp94–Pro128, Asn129–Ile159, Asp160–Ser194, Thr196–Arg221, Asp222–Lys256, Asp258–Leu292, Asn293–Lys323, Asp324–Ile354, Thr360–Pro395, and Lys396–Asp426. Residues Leu431–Glu506 form a type E motif region. Residues Glu497–Phe512 form a required for function in RNA editing region. Residues Asn507–Lys537 are type E(+) motif. Residues Ser538–Trp632 form a type DYW motif region.

This sequence belongs to the PPR family. PCMP-H subfamily. The cofactor is Zn(2+).

It is found in the plastid. The protein localises to the chloroplast. Functionally, plays a major role in single RNA editing events in chloroplasts. Acts as a site-recognition transacting factor involved in the edition of the site 5 of ndhB1 and ndhB2 (ndhB1-5 and ndhB2-5 sites corresponding to cytidine-830), which are plastid-encoded subunits of the NADH-plastoquinone oxidoreductase. May provide the catalytic activity for editing site conversion. The polypeptide is Pentatricopeptide repeat-containing protein ELI1, chloroplastic (Arabidopsis thaliana (Mouse-ear cress)).